Consider the following 264-residue polypeptide: uncharacterized protein (264 aa).

Transmembrane regions (helical) follow at residues 19-39 (LFPA…LPFL), 42-62 (YDWL…SGLE), 69-89 (VITL…HMGS), 100-120 (IFGV…YLCQ), 136-156 (FAVV…HFSI), 160-180 (WWLS…YEVN), 192-212 (FILI…FGAW), and 223-243 (LVHL…FLIV).

It localises to the cell membrane. This is an uncharacterized protein from Bacillus subtilis (strain 168).